A 434-amino-acid polypeptide reads, in one-letter code: Putative G3BP-like protein (434 aa).

One can recognise an NTF2 domain in the interval 18-134; it reads IGWMFVQEYY…YFVLNDIFRF (117 aa). Disordered stretches follow at residues 141–180 and 274–308; these read EEEESPDAVEKEKKDVASEPYVNGVQSQEHLPSAKEEGHY and VKSQASVSSTASTTGQTVKGVNADQTQQPTAPYTQ. A Phosphoserine modification is found at S145. Positions 148-157 are enriched in basic and acidic residues; it reads AVEKEKKDVA. Residues 276 to 291 are compositionally biased toward low complexity; that stretch reads SQASVSSTASTTGQTV. Residues 296–308 are compositionally biased toward polar residues; it reads ADQTQQPTAPYTQ. The RRM domain occupies 315 to 386; sequence TSVFVKNIPP…ATLNIEERRR (72 aa). A disordered region spans residues 390-434; the sequence is GKFNKSGDKKSNDNYNGMKRNFRKGNRGAFDGRSKEVTTSKKQNN. Basic and acidic residues predominate over residues 419 to 428; that stretch reads FDGRSKEVTT.

Its function is as follows. Probable scaffold protein that may be involved in mRNA transport. The chain is Putative G3BP-like protein (nxt3) from Schizosaccharomyces pombe (strain 972 / ATCC 24843) (Fission yeast).